A 118-amino-acid polypeptide reads, in one-letter code: uncharacterized protein (118 aa).

The protein to S.pombe tam6.

The protein localises to the mitochondrion. This is an uncharacterized protein from Saccharomyces cerevisiae (strain ATCC 204508 / S288c) (Baker's yeast).